Here is a 584-residue protein sequence, read N- to C-terminus: 2-succinyl-5-enolpyruvyl-6-hydroxy-3-cyclohexene-1-carboxylate synthase (584 aa).

The protein belongs to the TPP enzyme family. MenD subfamily. As to quaternary structure, homodimer. Mg(2+) is required as a cofactor. Mn(2+) serves as cofactor. Requires thiamine diphosphate as cofactor.

The enzyme catalyses isochorismate + 2-oxoglutarate + H(+) = 5-enolpyruvoyl-6-hydroxy-2-succinyl-cyclohex-3-ene-1-carboxylate + CO2. Its pathway is quinol/quinone metabolism; 1,4-dihydroxy-2-naphthoate biosynthesis; 1,4-dihydroxy-2-naphthoate from chorismate: step 2/7. The protein operates within quinol/quinone metabolism; menaquinone biosynthesis. In terms of biological role, catalyzes the thiamine diphosphate-dependent decarboxylation of 2-oxoglutarate and the subsequent addition of the resulting succinic semialdehyde-thiamine pyrophosphate anion to isochorismate to yield 2-succinyl-5-enolpyruvyl-6-hydroxy-3-cyclohexene-1-carboxylate (SEPHCHC). The sequence is that of 2-succinyl-5-enolpyruvyl-6-hydroxy-3-cyclohexene-1-carboxylate synthase from Bacillus cereus (strain ZK / E33L).